The following is a 170-amino-acid chain: Photosystem I assembly protein Ycf3 (170 aa).

TPR repeat units follow at residues 35 to 68, 72 to 105, and 120 to 153; these read AFTH…EIDP, SYIL…NSSL, and GEQA…APSN.

Belongs to the Ycf3 family.

It is found in the plastid. The protein localises to the chloroplast thylakoid membrane. In terms of biological role, essential for the assembly of the photosystem I (PSI) complex. May act as a chaperone-like factor to guide the assembly of the PSI subunits. This is Photosystem I assembly protein Ycf3 from Anthoceros angustus (Hornwort).